An 87-amino-acid polypeptide reads, in one-letter code: Small ribosomal subunit protein uS17 (87 aa).

This sequence belongs to the universal ribosomal protein uS17 family. Part of the 30S ribosomal subunit.

Functionally, one of the primary rRNA binding proteins, it binds specifically to the 5'-end of 16S ribosomal RNA. The protein is Small ribosomal subunit protein uS17 of Bacillus subtilis (strain 168).